A 169-amino-acid polypeptide reads, in one-letter code: Putative pre-16S rRNA nuclease (169 aa).

Positions 1–19 (MTDSDHRLPDRPGEGDPGR) are enriched in basic and acidic residues. The interval 1–22 (MTDSDHRLPDRPGEGDPGRGRR) is disordered.

It belongs to the YqgF nuclease family.

It localises to the cytoplasm. Functionally, could be a nuclease involved in processing of the 5'-end of pre-16S rRNA. The chain is Putative pre-16S rRNA nuclease from Mycobacterium sp. (strain JLS).